The chain runs to 74 residues: Turripeptide OL135 (74 aa).

The N-terminal stretch at 1–20 (MKVPIVLMLVLLLIMPLSDG) is a signal peptide. A propeptide spanning residues 21–28 (YERKRXXX) is cleaved from the precursor.

Belongs to the conopeptide P-like superfamily. Post-translationally, contains 3 disulfide bonds. As to expression, expressed by the venom duct.

The protein resides in the secreted. In terms of biological role, acts as a neurotoxin by inhibiting an ion channel. This is Turripeptide OL135 from Iotyrris olangoensis (Sea snail).